A 149-amino-acid chain; its full sequence is 3-hydroxyacyl-[acyl-carrier-protein] dehydratase FabZ (149 aa).

Histidine 53 is a catalytic residue.

This sequence belongs to the thioester dehydratase family. FabZ subfamily.

It localises to the cytoplasm. It carries out the reaction a (3R)-hydroxyacyl-[ACP] = a (2E)-enoyl-[ACP] + H2O. Involved in unsaturated fatty acids biosynthesis. Catalyzes the dehydration of short chain beta-hydroxyacyl-ACPs and long chain saturated and unsaturated beta-hydroxyacyl-ACPs. The chain is 3-hydroxyacyl-[acyl-carrier-protein] dehydratase FabZ from Neisseria gonorrhoeae (strain ATCC 700825 / FA 1090).